Reading from the N-terminus, the 365-residue chain is MRPHERFHDFLDDFRNPYSRDRDRIIHCSSFRRLEYKTQVFLNSSGDYFRTRLTHSIEVSQIARSIASHLGLNETLAEAIALSHDLGHTPFGHAGGDELDRLLKKHGFEAGFDHNFQSFRVVSKLEKRYPNFEGLNLTFATLEGILKHSYPYQKSFLDAAMNEIFALDYHPSLEAIVVDHADEIAYVSHDIDDGIKYGLIRLEDLEESELVGEMIDKAEQEGVKRSEKVFRYRFVSNLINHLVYGFLEGSQEARLHQGEVRSAMIPSGERLPLGFSPEMGRKLKKLKKLLFTKLYRHEQVNRKMFFGRGCIRALFEDFMNEKNLLPKELQERINQGGKAHRVVADYIASMSDRYAMNLYKELHIG.

Residues 52–187 (RLTHSIEVSQ…VDHADEIAYV (136 aa)) enclose the HD domain.

This sequence belongs to the dGTPase family. Type 2 subfamily.

This chain is Deoxyguanosinetriphosphate triphosphohydrolase-like protein, found in Wolinella succinogenes (strain ATCC 29543 / DSM 1740 / CCUG 13145 / JCM 31913 / LMG 7466 / NCTC 11488 / FDC 602W) (Vibrio succinogenes).